Here is a 67-residue protein sequence, read N- to C-terminus: U-myrmeciitoxin(01)-Mg4a (67 aa).

The signal sequence occupies residues 1–25 (MGKVFFFVLMIAIIGSTFLIEEALG).

This sequence belongs to the ant myrmeciitoxin-01 family. Homodimer; disulfide-linked. Contains 2 intrachain disulfide bonds (one per chain) and 1 interchain disulfide bond. In terms of tissue distribution, expressed by the venom gland.

It localises to the secreted. The polypeptide is U-myrmeciitoxin(01)-Mg4a (Myrmecia gulosa (Red bulldog ant)).